A 142-amino-acid polypeptide reads, in one-letter code: Transcriptional regulator MraZ (142 aa).

SpoVT-AbrB domains are found at residues 5-47 (NYQH…TNQE) and 76-119 (SLTV…DINA).

Belongs to the MraZ family. In terms of assembly, forms oligomers.

The protein localises to the cytoplasm. It is found in the nucleoid. The protein is Transcriptional regulator MraZ of Mycoplasmoides gallisepticum (strain R(low / passage 15 / clone 2)) (Mycoplasma gallisepticum).